The primary structure comprises 38 residues: GFGCPLNQGACHRHCRSIRRRGGYCAGFFKQTCTCYRN.

3 disulfide bridges follow: Cys-4–Cys-25, Cys-11–Cys-33, and Cys-15–Cys-35.

This sequence belongs to the invertebrate defensin family. Type 2 subfamily.

It is found in the secreted. Dual-function peptide with antimicrobial and potassium channel-blocking activities. Shows inhibitory activity against Gram-positive bacteria such as M.luteus, S.aureus, B.subtilis, and M.luteus as well as methicillin-resistant S.aureus (MIC=0.1-20 uM). Does not act on bacteria by disrupting membranes. Also moderately inhibits Kv1.1/KCNA1, Kv1.2/KCNA2, and Kv1.3/KCNA3 potassium channels. Inhibits potassium channels by interacting with the pore region. Does not show hemolytic activity. This Leiurus hebraeus (Hebrew deathstalker scorpion) protein is 4 kDa defensin.